The following is a 119-amino-acid chain: Large ribosomal subunit protein bL20 (119 aa).

The protein belongs to the bacterial ribosomal protein bL20 family.

Functionally, binds directly to 23S ribosomal RNA and is necessary for the in vitro assembly process of the 50S ribosomal subunit. It is not involved in the protein synthesizing functions of that subunit. This Shewanella halifaxensis (strain HAW-EB4) protein is Large ribosomal subunit protein bL20.